A 408-amino-acid chain; its full sequence is LIN1-like protein (408 aa).

The segment at 1-161 (MKRTLRNPGN…SVPSSPKRMS (161 aa)) is disordered. Over residues 41–52 (YYESESEEDEDQ) the composition is skewed to acidic residues. Basic and acidic residues-rich tracts occupy residues 53–62 (ILNKEKKEGQ), 73–109 (DEKR…KEVL), and 119–129 (NGKYSKLRYED). Residues 344–402 (SSQYNFKWEFDDKTYGPYTASQIQAWSNEGYFTDAKHAAFIQLANMDEWMYPNNICFCD) enclose the GYF domain.

It belongs to the LIN1 family.

The polypeptide is LIN1-like protein (Schizosaccharomyces pombe (strain 972 / ATCC 24843) (Fission yeast)).